We begin with the raw amino-acid sequence, 204 residues long: bMERB domain-containing protein 1 (204 aa).

A bMERB domain is found at 3 to 150; that stretch reads LKQSLSTHLE…EQEEDKEMAD (148 aa). The interval 162-187 is disordered; that stretch reads VTKSPASSRAEKKAEPPPSKPTVAKT.

This chain is bMERB domain-containing protein 1 (BMERB1), found in Pongo abelii (Sumatran orangutan).